The following is a 253-amino-acid chain: Probable transcriptional regulatory protein Mlut_12910 (253 aa).

Belongs to the TACO1 family.

It is found in the cytoplasm. The polypeptide is Probable transcriptional regulatory protein Mlut_12910 (Micrococcus luteus (strain ATCC 4698 / DSM 20030 / JCM 1464 / CCM 169 / CCUG 5858 / IAM 1056 / NBRC 3333 / NCIMB 9278 / NCTC 2665 / VKM Ac-2230) (Micrococcus lysodeikticus)).